Reading from the N-terminus, the 477-residue chain is PTS system glucose-specific EIICB component (477 aa).

The PTS EIIC type-1 domain occupies 1 to 388; sequence MFKNVFSSLQ…FNLKTPGREE (388 aa). 9 helical membrane-spanning segments follow: residues 20-40, 51-71, 76-96, 112-132, 152-172, 250-270, 280-300, 304-324, and 354-374; these read VSVLPIAGILLGIGSAHFTLI, TGGSIFSNMPLIFAIGVALGF, GVAALAAVVAYSILIQTLSAV, NFSDIGILGGIIAGAISAYMF, FVPIISGLFAIFVGLILSLIW, LSGGFIFKMYGLPGAALAIWH, IGSIMISAALTAFLTGITEPI, FILVAPILYIIHAILAGLSFP, and IFLFPIVGICYGLLYYSIFYF. The PTS EIIB type-1 domain maps to 399 to 477; sequence IEIAPYIVEA…TAIDEYINNI (79 aa). Residue Cys421 is the Phosphocysteine intermediate; for EIIB activity of the active site. A Phosphocysteine modification is found at Cys421.

The protein resides in the cell inner membrane. It catalyses the reaction N(pros)-phospho-L-histidyl-[protein] + D-glucose(out) = D-glucose 6-phosphate(in) + L-histidyl-[protein]. Its function is as follows. The phosphoenolpyruvate-dependent sugar phosphotransferase system (sugar PTS), a major carbohydrate active transport system, catalyzes the phosphorylation of incoming sugar substrates concomitantly with their translocation across the cell membrane. The enzyme II complex composed of PtsG and Crr is involved in glucose transport. The protein is PTS system glucose-specific EIICB component (ptsG) of Buchnera aphidicola subsp. Schizaphis graminum (strain Sg).